We begin with the raw amino-acid sequence, 214 residues long: ER lumen protein-retaining receptor 3 (214 aa).

At 1-4 (MNVF) the chain is on the lumenal side. The helical transmembrane segment at 5 to 24 (RILGDLSHLLAMILLLVKIW) threads the bilayer. At 25–32 (RSKSCAGI) the chain is on the cytoplasmic side. Residues 33 to 52 (SGKSQILFALVFTTRYLDLF) form a helical membrane-spanning segment. The tract at residues 47-48 (RY) is interaction with the K-D-E-L motif on target proteins. At 53–58 (SNFISI) the chain is on the lumenal side. A helical transmembrane segment spans residues 59–79 (YNTVMKVVFLLCAYVTVYMIY). At 80–92 (WKFRKTFDIENDT) the chain is on the cytoplasmic side. Residues 93 to 110 (FRLEFLLVPVTGLSFLVN) form a helical membrane-spanning segment. Topologically, residues 111-116 (YSYTPM) are lumenal. A helical membrane pass occupies residues 117–135 (EVLWTFSIYLESVAILPQL). Residues 136-149 (FMISKTGEAETITT) are Cytoplasmic-facing. Residues 150-168 (HYLFFLGLYRLLYLANWIR) form a helical membrane-spanning segment. The interval 159–169 (RLLYLANWIRR) is interaction with the K-D-E-L motif on target proteins. Topologically, residues 169-178 (RYQTENFYDQ) are lumenal. Residues 179–199 (ISVVSGVVQTIFYCDFFYLYV) traverse the membrane as a helical segment. The Cytoplasmic portion of the chain corresponds to 200-214 (TKVLKGKKLSLPVPV). Positions 204 to 207 (KGKK) are important for recycling of cargo proteins with the sequence motif K-D-E-L from the Golgi to the endoplasmic reticulum.

This sequence belongs to the ERD2 family.

It is found in the endoplasmic reticulum membrane. The protein resides in the golgi apparatus membrane. It localises to the cytoplasmic vesicle. The protein localises to the COPI-coated vesicle membrane. In terms of biological role, receptor for the C-terminal sequence motif K-D-E-L that is present on endoplasmic reticulum resident proteins and that mediates their recycling from the Golgi back to the endoplasmic reticulum. The polypeptide is ER lumen protein-retaining receptor 3 (Kdelr3) (Mus musculus (Mouse)).